The chain runs to 353 residues: B1 bradykinin receptor (353 aa).

Over 1 to 41 the chain is Extracellular; sequence MASQTLVVFQASNQSQLPPPNATLCDGAQEAWHLLHKVLPT. Residues Asn13 and Asn21 are each glycosylated (N-linked (GlcNAc...) asparagine). The helical transmembrane segment at 42–62 threads the bilayer; it reads CVVAICSGGLLGNLFVLSVFL. The Cytoplasmic segment spans residues 63-72; the sequence is VPRRRLNAAE. Residues 73–93 traverse the membrane as a helical segment; the sequence is IYLAHLAASDLVFALGLPFWA. The Extracellular portion of the chain corresponds to 94-110; it reads ETIRNGFHWPFGAPLCR. Cys109 and Cys189 form a disulfide bridge. A helical transmembrane segment spans residues 111 to 131; it reads VVNGVIKANLFISIFLVVAIS. The Cytoplasmic segment spans residues 132 to 154; it reads RDRYRALVHPVASWRRRRRRHWA. The helical transmembrane segment at 155–175 threads the bilayer; it reads QATCVLIWTAGGLLSIPTFLL. The Extracellular portion of the chain corresponds to 176–207; that stretch reads RSVQVVPELNVSACVLPFPHEAWAFVRTVELN. Asn185 carries N-linked (GlcNAc...) asparagine glycosylation. Residues 208-228 form a helical membrane-spanning segment; the sequence is VLGFLLPLAAILFFNYHILAA. At 229–251 the chain is on the cytoplasmic side; that stretch reads LRGREQLSRTRCGGPRDGKTTAL. The chain crosses the membrane as a helical span at residues 252-272; it reads ILTLVAVFLLCWTPYHVCAFL. At 273–295 the chain is on the extracellular side; it reads EFLLHVRAIRGCFWEDFTDLGLQ. A helical transmembrane segment spans residues 296 to 316; it reads YTNFFAFINSCLNPVIYVFWG. At 317 to 353 the chain is on the cytoplasmic side; the sequence is QLFRTKIWELYHRCLPRKLTAVSSSRRKEIFQIFWRN. Cys330 carries the S-palmitoyl cysteine lipid modification.

This sequence belongs to the G-protein coupled receptor 1 family. Bradykinin receptor subfamily. BDKRB1 sub-subfamily.

The protein localises to the cell membrane. In terms of biological role, this is a receptor for bradykinin. Could be a factor in chronic pain and inflammation. This is B1 bradykinin receptor (BDKRB1) from Sus scrofa (Pig).